We begin with the raw amino-acid sequence, 359 residues long: Cinnamyl alcohol dehydrogenase 8 (359 aa).

Position 46 (Cys46) interacts with Zn(2+). Ser48 lines the NADP(+) pocket. Positions 68, 69, 99, 102, 105, 113, and 162 each coordinate Zn(2+). Residues Thr166, 187–192 (GLGGLG), 210–215 (STSEKK), Thr250, Gly274, and 297–299 (SMI) each bind NADP(+).

This sequence belongs to the zinc-containing alcohol dehydrogenase family. In terms of assembly, homodimer. Zn(2+) serves as cofactor. As to expression, expressed in the differentiation and elongation zones of primary and lateral roots. Expressed in the hypocotyl, cotyledon veins, vasculature of the first rosette leaves, hydathodes and trichomes. In stems, expressed in the vascular cambium and developing xylem tissues. Expressed in the style, anthers, stamen filaments, stigmatic regions in flowers, and abscission and style regions of siliques.

It carries out the reaction (E)-cinnamyl alcohol + NADP(+) = (E)-cinnamaldehyde + NADPH + H(+). It participates in aromatic compound metabolism; phenylpropanoid biosynthesis. In terms of biological role, involved in lignin biosynthesis. Catalyzes the final step specific for the production of lignin monomers. Catalyzes the NADPH-dependent reduction of coniferaldehyde, 5-hydroxyconiferaldehyde, sinapaldehyde, 4-coumaraldehyde and caffeyl aldehyde to their respective alcohols. The protein is Cinnamyl alcohol dehydrogenase 8 (CAD8) of Arabidopsis thaliana (Mouse-ear cress).